The chain runs to 197 residues: Cytochrome c oxidase polypeptide 5, mitochondrial (197 aa).

Residues M1–S13 constitute a mitochondrion transit peptide. At S14–K129 the chain is on the mitochondrial matrix side. A helical membrane pass occupies residues V130–F147. The Mitochondrial intermembrane portion of the chain corresponds to A148–Q197.

Belongs to the cytochrome c oxidase IV family. As to quaternary structure, component of the cytochrome c oxidase (complex IV, CIV), a multisubunit enzyme composed of a catalytic core of 3 subunits and seevral supernumerary subunits. The complex exists as a monomer or a dimer and forms supercomplexes (SCs) in the inner mitochondrial membrane with ubiquinol-cytochrome c oxidoreductase (cytochrome b-c1 complex, complex III, CIII).

The protein resides in the mitochondrion inner membrane. The protein operates within energy metabolism; oxidative phosphorylation. Its function is as follows. Component of the cytochrome c oxidase, the last enzyme in the mitochondrial electron transport chain which drives oxidative phosphorylation. The respiratory chain contains 3 multisubunit complexes succinate dehydrogenase (complex II, CII), ubiquinol-cytochrome c oxidoreductase (cytochrome b-c1 complex, complex III, CIII) and cytochrome c oxidase (complex IV, CIV), that cooperate to transfer electrons derived from NADH and succinate to molecular oxygen, creating an electrochemical gradient over the inner membrane that drives transmembrane transport and the ATP synthase. Cytochrome c oxidase is the component of the respiratory chain that catalyzes the reduction of oxygen to water. Electrons originating from reduced cytochrome c in the intermembrane space (IMS) are transferred via the dinuclear copper A center (CU(A)) of subunit 2 and heme A of subunit 1 to the active site in subunit 1, a binuclear center (BNC) formed by heme A3 and copper B (CU(B)). The BNC reduces molecular oxygen to 2 water molecules using 4 electrons from cytochrome c in the IMS and 4 protons from the mitochondrial matrix. The protein is Cytochrome c oxidase polypeptide 5, mitochondrial (cox5) of Aspergillus niger.